The primary structure comprises 132 residues: Snaclec bothroinsularin subunit alpha (132 aa).

Cystine bridges form between Cys2–Cys13, Cys30–Cys127, and Cys102–Cys119. Positions 9 to 128 (YGQYCYKFFQ…CGQQNPFVCK (120 aa)) constitute a C-type lectin domain.

Belongs to the snaclec family. As to quaternary structure, heterodimer of subunits alpha and beta; disulfide-linked. As to expression, expressed by the venom gland.

The protein resides in the secreted. Functionally, thrombin and prothrombin (F2) inhibitor. The IC(50) of thrombin-induced platelet aggregation and fibrinocoagulation is 62 and 35 nM, respectively. Its inhibitory activity is at least 10-fold lower than that observed for other thrombin inhibitors. The protein is Snaclec bothroinsularin subunit alpha of Bothrops insularis (Golden lancehead).